The following is an 842-amino-acid chain: Ionotropic receptor 21a (842 aa).

An N-terminal signal peptide occupies residues 1 to 15 (MSYYWVALVLFTAQA). An N-linked (GlcNAc...) asparagine glycan is attached at N325. Helical transmembrane passes span 405–425 (WPVWVALICVYLGGIFPIVFT) and 437–457 (WGEVENMFWYVFGMFTNAFSF). N469 is a glycosylation site (N-linked (GlcNAc...) asparagine). The chain crosses the membrane as a helical span at residues 479–499 (WLFTIIITSCYTGSIIAFVTL). Residues N533, N558, N583, and N588 are each glycosylated (N-linked (GlcNAc...) asparagine). A helical membrane pass occupies residues 680–700 (MFLLMALGYFLGATALVSEIV). The tract at residues 722-745 (WSSASSGSMLRTNAEQLSHDKRKA) is disordered. N-linked (GlcNAc...) asparagine glycans are attached at residues N765 and N797.

Belongs to the glutamate-gated ion channel (TC 1.A.10.1) family. As to expression, expressed in the dorsal organ cool cells. In the antenna, expressed in approximately six neurons in the arista as well as five to ten neurons near the third chamber of the sacculus.

The protein localises to the cell membrane. Functionally, integral part of a neural sensory system in the antenna that provides the neural basis for the response to environmental changes in temperature (thermosensation). Together with Ir25a and Ir93a, mediates the response of the dorsal organ cool cells, a trio of cool-responsive neurons, to cooling and is required for cool avoidance behavior. In Drosophila melanogaster (Fruit fly), this protein is Ionotropic receptor 21a.